We begin with the raw amino-acid sequence, 294 residues long: Protoheme IX farnesyltransferase (294 aa).

The next 8 membrane-spanning stretches (helical) occupy residues P19–M39, L41–V61, V89–I109, P111–W131, L138–A158, A166–I186, V218–L238, and S272–W292.

This sequence belongs to the UbiA prenyltransferase family. Protoheme IX farnesyltransferase subfamily.

It is found in the cell membrane. The catalysed reaction is heme b + (2E,6E)-farnesyl diphosphate + H2O = Fe(II)-heme o + diphosphate. It functions in the pathway porphyrin-containing compound metabolism; heme O biosynthesis; heme O from protoheme: step 1/1. Converts heme B (protoheme IX) to heme O by substitution of the vinyl group on carbon 2 of heme B porphyrin ring with a hydroxyethyl farnesyl side group. This is Protoheme IX farnesyltransferase from Korarchaeum cryptofilum (strain OPF8).